The sequence spans 290 residues: Pyridoxal kinase PdxY (290 aa).

Substrate contacts are provided by residues Ser12 and 47 to 48 (TQ). Residues Asp114, Glu151, Lys184, and 211–214 (RPLL) contribute to the ATP site. Asp225 is a substrate binding site.

Belongs to the pyridoxine kinase family. PdxY subfamily. As to quaternary structure, homodimer. Mg(2+) serves as cofactor.

It carries out the reaction pyridoxal + ATP = pyridoxal 5'-phosphate + ADP + H(+). It functions in the pathway cofactor metabolism; pyridoxal 5'-phosphate salvage; pyridoxal 5'-phosphate from pyridoxal: step 1/1. Pyridoxal kinase involved in the salvage pathway of pyridoxal 5'-phosphate (PLP). Catalyzes the phosphorylation of pyridoxal to PLP. This chain is Pyridoxal kinase PdxY, found in Pseudomonas entomophila (strain L48).